We begin with the raw amino-acid sequence, 486 residues long: Glutamate--tRNA ligase 2 (486 aa).

The 'HIGH' region motif lies at 12-22 (PSPTGELHIGN). A 'KMSKS' region motif is present at residues 252-256 (KLSKR). Residue K255 participates in ATP binding.

Belongs to the class-I aminoacyl-tRNA synthetase family. Glutamate--tRNA ligase type 1 subfamily. Monomer.

The protein resides in the cytoplasm. The catalysed reaction is tRNA(Glu) + L-glutamate + ATP = L-glutamyl-tRNA(Glu) + AMP + diphosphate. Its function is as follows. Catalyzes the attachment of glutamate to tRNA(Glu) in a two-step reaction: glutamate is first activated by ATP to form Glu-AMP and then transferred to the acceptor end of tRNA(Glu). This chain is Glutamate--tRNA ligase 2, found in Syntrophus aciditrophicus (strain SB).